The following is a 434-amino-acid chain: UPF0053 protein YrkA (434 aa).

The CNNM transmembrane domain maps to 1 to 201 (MTTINLIIFT…YKSGEINQNE (201 aa)). The next 3 membrane-spanning stretches (helical) occupy residues 7–27 (IIFT…FAIV), 64–84 (LGIT…FEVI), and 101–121 (VLIL…VGEL). CBS domains are found at residues 220-282 (MIPR…KIKE) and 289-346 (HINP…IRDE).

Belongs to the UPF0053 family.

The protein localises to the cell membrane. The sequence is that of UPF0053 protein YrkA (yrkA) from Bacillus subtilis (strain 168).